A 148-amino-acid polypeptide reads, in one-letter code: UPF0178 protein Pcar_2632 (148 aa).

The protein belongs to the UPF0178 family.

The sequence is that of UPF0178 protein Pcar_2632 from Syntrophotalea carbinolica (strain DSM 2380 / NBRC 103641 / GraBd1) (Pelobacter carbinolicus).